The sequence spans 443 residues: Cysteine proteinase B (443 aa).

Positions 1–27 (MATSRAALCAVAVVCVVLAAACAPARA) are cleaved as a signal peptide. A propeptide spans 28 to 125 (IHVGTPAAAL…YRKARADLSA (98 aa)) (activation peptide). Intrachain disulfides connect Cys-147–Cys-188 and Cys-181–Cys-226. Residue Cys-150 is part of the active site. N-linked (GlcNAc...) asparagine glycosylation occurs at Asn-228. Cys-281 and Cys-329 are oxidised to a cystine. Residues His-288 and Asn-308 contribute to the active site.

This sequence belongs to the peptidase C1 family.

The sequence is that of Cysteine proteinase B (LMCPB) from Leishmania mexicana.